The chain runs to 99 residues: Integration host factor subunit alpha (99 aa).

Residues 52 to 73 (FGNFTLRDKPQRPGRNPKTGEE) form a disordered region.

It belongs to the bacterial histone-like protein family. Heterodimer of an alpha and a beta chain.

In terms of biological role, this protein is one of the two subunits of integration host factor, a specific DNA-binding protein that functions in genetic recombination as well as in transcriptional and translational control. This Legionella pneumophila subsp. pneumophila (strain Philadelphia 1 / ATCC 33152 / DSM 7513) protein is Integration host factor subunit alpha.